The sequence spans 425 residues: Tol-Pal system protein TolB (425 aa).

A signal peptide spans 1-25 (MTRKHILSFALMTALGMTVTSTAFA).

It belongs to the TolB family. In terms of assembly, the Tol-Pal system is composed of five core proteins: the inner membrane proteins TolA, TolQ and TolR, the periplasmic protein TolB and the outer membrane protein Pal. They form a network linking the inner and outer membranes and the peptidoglycan layer.

It is found in the periplasm. Its function is as follows. Part of the Tol-Pal system, which plays a role in outer membrane invagination during cell division and is important for maintaining outer membrane integrity. This Acinetobacter baylyi (strain ATCC 33305 / BD413 / ADP1) protein is Tol-Pal system protein TolB.